The chain runs to 1488 residues: MSGNFRFMMDQKDIVRFLTTTIDSFIQDRLINKEQRTQHKDQCAERLAAEDGNTDKETEVEYSDQAVLANLDWGIEALEEAINTYNMETKLARLDYAEKMLQVCAMLNPKQKTAGVPNSYLSAWAHLNLSYLWKLRNNIKSCIYHSLEMFIVDPFFSRIDFAPELWKNLFLPHMSSIVGWYSEERHKLMMEVLPESTDFSYTADFDKVFNESLVFSMRPNQLEKLQKLEQLYGESLDENTRLYAKYYNDCMNPDSTSSKKVVPMLPIAEPPMTPLHELSRSVPDFVKFGPILPKSSGFSMTTRRSNDGLNETTRENIASNSNHSKGEQSSLWAAKESIIEEIEDDLDSEHYDASVDSDKINIFSPEPKKNIKDEDVEPKVYRSNQKNQMNSPNISPMESPRRASNYSSTNPLRRKKESKFLRLLSNRFTGSIVSDHSLSSSPDTSSDHIFTGDEEVMVRNNIKRKNDSQTPSMNQDNENSLVLNDSSHCESEDGYQSSSSFPKLEKLTIGSKPPKDFVCPITGQIFSDPVTLETGQTYERKAIQEWLGTGNTTCPITRQALSANILPKTNYVLKRLIVSWKEQNPELAQEFSNSNTPRGSSCSPSAKDITMVSSIQRTTDSPSQKYKDDYIRQRNNRFTRVSVGASPTSVLSQAAVETIINSLTPYITSLCTSENLQDCEQAVLEIARLWKDSKTDPQIHSYLSKPTVVSGLVEILSASLNREVLRRSIYILSELIFSDERVGETLNSVDSDFDCLAMLLKNGLAEAALLIYQLRPVFAQLSEHELIPSLIQVIQNKSEDIDDFQLAIDPKAAAIAILEQILIGGDEYNRSVNASSVISANGIPAIVKYLDKTEGRRPVISILLCCMQAEKSCKSSIANRIELSPVLELFHAGNDSVRGICVEFLSELVRLNRRTSSNQTLQIIKDEGAFSTMHTFLVYLQMAPMEHQIAVASLLLQLDLLAEPRKMSIYREEAVETLIEALWQKDFSNNQMKALDALLFLIGHVTSSGKSYTEAGLLKIAGFDQPYNVLMKAEQLGHSDNDFMETMEDEKNAMKSWQKRVASVLCNHENGSIFQALEECLKSNSLKMAKSCLVLATWLTHMLFTLPDTGVRDVARKSLLEALMNVLQSSKNLEEKILASLALKSFISDPTVHEVLRVYAKSIYRILRKLKKYSTVAADILKALLNLNSVDVTELWSCKEVVELDLSSNGEVLSLHYLNGQVLSGHADGTIKVWDARKRIPRVIQETREHKKAVTSLCSSVDKLYSSSLDKTIRVWTIKPDGIKCIDVYDVKEAVYELAANAKLACYVTQGTGVKVFNWLDAPKFINFNKYVKCLAVSGDKLYCGCSGYSIQEVDLSKYTSTSFFTGTRKLLGKQTIHSLQIHDDLLFACGSSIDATAGKIFSLSSKMVVGSLSTGLDVHRVAINSDFIFAGTKFGTIEVWLKDKFTRVASIKMAGGNTKITSLASDADGMMLFVGSSDGKIQVWALD.

3 disordered regions span residues 297 to 330 (GFSM…EQSS), 351 to 414 (YDAS…PLRR), and 432 to 500 (IVSD…SSSS). A compositionally biased stretch (basic and acidic residues) spans 366 to 380 (EPKKNIKDEDVEPKV). Residues 382 to 411 (RSNQKNQMNSPNISPMESPRRASNYSSTNP) are compositionally biased toward polar residues. Over residues 432 to 444 (IVSDHSLSSSPDT) the composition is skewed to low complexity. Positions 468–486 (SQTPSMNQDNENSLVLNDS) are enriched in polar residues. One can recognise a U-box domain in the interval 512–587 (KPPKDFVCPI…VSWKEQNPEL (76 aa)). WD repeat units lie at residues 1207-1244 (SSNG…PRVI), 1249-1290 (EHKK…DVYD), 1412-1451 (SLST…RVAS), and 1456-1488 (GGNT…WALD).

As to expression, expressed in roots and nodules.

The catalysed reaction is S-ubiquitinyl-[E2 ubiquitin-conjugating enzyme]-L-cysteine + [acceptor protein]-L-lysine = [E2 ubiquitin-conjugating enzyme]-L-cysteine + N(6)-ubiquitinyl-[acceptor protein]-L-lysine.. The protein operates within protein modification; protein ubiquitination. Functionally, putative E3 ubiquitin ligase involved in the rhizobial infection process. Plays an important role in the early steps of bacterial symbiont thread formation in roots, and in growth, differentiation and maintenance of nodules. In Medicago truncatula (Barrel medic), this protein is Putative E3 ubiquitin-protein ligase LIN.